Here is a 376-residue protein sequence, read N- to C-terminus: MFKFQTNGFSGYAVRYSPFYDNKIAVATSANYGLVGNGRLYVLSIMDDGNIITDISYDTQDGLFGVAWSETNENHVLTSSGDGCVSLFDTTLKDYPVMKFTEHQREVFSVDWSNIDKNLFCSASWDGSVKVWSPGSNRNTSLLTLRSLASREEKTGRIEKPIPVVQPSQVPMSKTRPNIRNDNNDCVYDAKFSFHDPNIIMSCNSDSHLQLWDTRLPNPLFMDFVAHNGLEALSCDFNRYRPFVVASAGVDKLAKVWDTRMIQPNVHSRPPRALNKFMGHEFAIRKLAWSPHGPTQLLTCSYDMTVRVWNDSPSPTSRVGLLDGASQPHAPPCSKIFSAHTEFVMGCDWSLWGEPGWVVTTGWDEMVYVWNTQRLQ.

WD repeat units lie at residues 58–98 (DTQD…YPVM), 102–142 (EHQR…NTSL), 182–222 (DNND…PLFM), 226–267 (AHNG…PNVH), 279–319 (GHEF…TSRV), and 339–376 (AHTE…QRLQ).

Belongs to the WD repeat peroxin-7 family. Interacts with PEX20. Post-translationally, polyubiquitinated, leading to its degradation by the proteasome. Ubiquitination is dependent of PEX5 and PEX20 and takes place following recycling into the cytosol.

The protein localises to the cytoplasm. Its subcellular location is the cytosol. It localises to the peroxisome matrix. Receptor required for the peroxisomal import of proteins containing a C-terminal PTS2-type peroxisomal targeting signal, such as 3-oxoacyl-CoA thiolase. Specifically binds to cargo proteins containing a PTS2 peroxisomal targeting signal in the cytosol. Cargo protein-binding triggers interaction with PEX20 and formation of a ternary complex composed of PEX20 and PEX7 along with PTS2-containing cargo proteins, which is tranlocated into peroxisomes by passing through the peroxisomal docking complex. PEX7 receptor is then retrotranslocated into the cytosol, where it is ubiquitinated and degraded. The protein is Peroxisomal targeting signal 2 receptor of Komagataella phaffii (strain GS115 / ATCC 20864) (Yeast).